A 712-amino-acid chain; its full sequence is Polyphosphate kinase (712 aa).

Residue Asn49 coordinates ATP. Mg(2+) is bound by residues Arg398 and Arg428. The active-site Phosphohistidine intermediate is the His458. Tyr491, Arg587, and His615 together coordinate ATP.

The protein belongs to the polyphosphate kinase 1 (PPK1) family. Mg(2+) is required as a cofactor. In terms of processing, an intermediate of this reaction is the autophosphorylated ppk in which a phosphate is covalently linked to a histidine residue through a N-P bond.

It catalyses the reaction [phosphate](n) + ATP = [phosphate](n+1) + ADP. Its function is as follows. Catalyzes the reversible transfer of the terminal phosphate of ATP to form a long-chain polyphosphate (polyP). The protein is Polyphosphate kinase of Parasynechococcus marenigrum (strain WH8102).